The sequence spans 154 residues: Putative pre-16S rRNA nuclease (154 aa).

It belongs to the YqgF nuclease family.

The protein resides in the cytoplasm. Functionally, could be a nuclease involved in processing of the 5'-end of pre-16S rRNA. The chain is Putative pre-16S rRNA nuclease from Gluconacetobacter diazotrophicus (strain ATCC 49037 / DSM 5601 / CCUG 37298 / CIP 103539 / LMG 7603 / PAl5).